The primary structure comprises 409 residues: Protein a6 (409 aa).

At Ser-86 the chain carries Phosphoserine. Basic residues predominate over residues 106–120 (RAHRTGRRQAPRRAA). A disordered region spans residues 106–165 (RAHRTGRRQAPRRAATHSYPVTDSILITSDDEHNEQEPSSTARVRSQLSMRSPPPLAPLT). Thr-133 bears the Phosphothreonine mark. The residue at position 134 (Ser-134) is a Phosphoserine. Residues 142–155 (EPSSTARVRSQLSM) are compositionally biased toward polar residues.

In Drosophila melanogaster (Fruit fly), this protein is Protein a6 (a6).